The sequence spans 91 residues: Large ribosomal subunit protein uL23 (91 aa).

This sequence belongs to the universal ribosomal protein uL23 family. As to quaternary structure, part of the 50S ribosomal subunit. Contacts protein L29, and trigger factor when it is bound to the ribosome.

In terms of biological role, one of the early assembly proteins it binds 23S rRNA. One of the proteins that surrounds the polypeptide exit tunnel on the outside of the ribosome. Forms the main docking site for trigger factor binding to the ribosome. In Staphylococcus saprophyticus subsp. saprophyticus (strain ATCC 15305 / DSM 20229 / NCIMB 8711 / NCTC 7292 / S-41), this protein is Large ribosomal subunit protein uL23.